We begin with the raw amino-acid sequence, 73 residues long: Neutrophil elastase 2B (73 aa).

Residues 1–73 (IVGGRPARPH…SGGPLVCNGL (73 aa)) enclose the Peptidase S1 domain. The Charge relay system role is filled by Ser64.

The protein belongs to the peptidase S1 family. Elastase subfamily.

May be involved in the degradation of connective tissue in chronic lung disease. In Equus caballus (Horse), this protein is Neutrophil elastase 2B.